The following is a 33-amino-acid chain: Mu-theraphotoxin-Osp1b (33 aa).

3 disulfides stabilise this stretch: C2–C17, C9–C22, and C16–C29.

The protein belongs to the neurotoxin 10 (Hwtx-1) family. 22 (Htx-4) subfamily. In terms of tissue distribution, expressed by the venom gland.

It is found in the secreted. Its function is as follows. Voltage-gated sodium channel Nav1.7/SCN9A inhibitor. This Orphnaecus sp. (strain Maanghit-Cave/Philippines) (Tarantula spider) protein is Mu-theraphotoxin-Osp1b.